The following is a 341-amino-acid chain: Cysteine-rich with EGF-like domain protein 2 (341 aa).

Positions methionine 1–threonine 24 are cleaved as a signal peptide. The region spanning aspartate 136–leucine 178 is the EGF-like domain. 3 disulfides stabilise this stretch: cysteine 140/cysteine 154, cysteine 148/cysteine 166, and cysteine 168/cysteine 177. An N-linked (GlcNAc...) asparagine glycan is attached at asparagine 190. FU repeat units follow at residues phenylalanine 193–cysteine 248 and serine 254–cysteine 308. The region spanning aspartate 291–cysteine 317 is the EGF-like 2; calcium-binding; truncated domain.

It belongs to the CRELD family.

It localises to the secreted. It is found in the endoplasmic reticulum. Its function is as follows. Possible role in neuronal acetylcholine receptor transport. This Danio rerio (Zebrafish) protein is Cysteine-rich with EGF-like domain protein 2 (creld2).